We begin with the raw amino-acid sequence, 409 residues long: Killer cell lectin-like receptor subfamily G member 2 (409 aa).

The segment at 1-120 (MEESWEAAPG…GAEPAPSAWA (120 aa)) is disordered. Residues 41 to 53 (PEGPESSPSPAGA) are compositionally biased toward low complexity. Pro residues predominate over residues 72-81 (SPRPGSPRVP). A compositionally biased stretch (low complexity) spans 104–120 (PRNGEAPGAEPAPSAWA). A Phosphoserine modification is found at Ser158. The disordered stretch occupies residues 193 to 216 (TESGCDAEGRASPAEGSAGSPGSP). Residues 202-216 (RASPAEGSAGSPGSP) show a composition bias toward low complexity. Residues 263 to 283 (WALAFMAVLLAVSGVVIVVLA) traverse the membrane as a helical segment. A C-type lectin domain is found at 300 to 405 (SEEHCYYFSA…CSTPRPWVCA (106 aa)). Intrachain disulfides connect Cys321/Cys404 and Cys383/Cys396.

The protein localises to the membrane. This is Killer cell lectin-like receptor subfamily G member 2 (KLRG2) from Homo sapiens (Human).